Here is a 1025-residue protein sequence, read N- to C-terminus: Error-prone DNA polymerase (1025 aa).

Belongs to the DNA polymerase type-C family. DnaE2 subfamily.

Its subcellular location is the cytoplasm. It carries out the reaction DNA(n) + a 2'-deoxyribonucleoside 5'-triphosphate = DNA(n+1) + diphosphate. In terms of biological role, DNA polymerase involved in damage-induced mutagenesis and translesion synthesis (TLS). It is not the major replicative DNA polymerase. In Pseudomonas fluorescens (strain Pf0-1), this protein is Error-prone DNA polymerase.